The primary structure comprises 1013 residues: AP-2 complex subunit alpha-2 (1013 aa).

HEAT repeat units lie at residues 254-289 (AMRA…VVKN), 354-391 (DIIK…VSNA), 393-430 (DIVE…DLSW), and 521-565 (TVST…CIDV). Residues 652-676 (STDPESVARSLSHPNGTLSNIDPQT) are disordered. Residues 663-675 (SHPNGTLSNIDPQ) show a composition bias toward polar residues. The GAE domain maps to 742–841 (ALCLKDSGVL…LDFSYKFGTN (100 aa)). A required for AP180 binding region spans residues 760–1013 (GIKAEWRGHH…DPGAMLAGLL (254 aa)).

It belongs to the adaptor complexes large subunit family. As to quaternary structure, adaptor protein complex 2 (AP-2) is a heterotetramer composed of two large adaptins (alpha-type and beta-type subunits), a medium adaptin (mu-type subunit) and a small adaptin (sigma-type subunit). Interacts with AP180.

It is found in the membrane. The protein localises to the coated pit. Functionally, subunit of the adaptor protein complex 2 (AP-2). Adaptor protein complexes function in protein transport via transport vesicles in different membrane traffic pathways. Adaptor protein complexes are vesicle coat components and appear to be involved in cargo selection and vesicle formation. AP-2 is involved in clathrin-dependent endocytosis in which cargo proteins are incorporated into vesicles surrounded by clathrin (clathrin-coated vesicles, CCVs) which are destined for fusion with the early endosome. The complex binds polyphosphoinositides. The sequence is that of AP-2 complex subunit alpha-2 (ALPHAC-AD) from Arabidopsis thaliana (Mouse-ear cress).